A 284-amino-acid polypeptide reads, in one-letter code: D-tagatose-1,6-bisphosphate aldolase subunit GatY (284 aa).

The active-site Proton donor is the aspartate 82. Zn(2+) is bound by residues histidine 83 and histidine 180. Glycine 181 serves as a coordination point for dihydroxyacetone phosphate. Histidine 208 is a Zn(2+) binding site. Dihydroxyacetone phosphate is bound by residues 209–211 (GAS) and 230–233 (NVAT).

Belongs to the class II fructose-bisphosphate aldolase family. TagBP aldolase GatY subfamily. Forms a complex with GatZ. It depends on Zn(2+) as a cofactor.

The catalysed reaction is D-tagatofuranose 1,6-bisphosphate = D-glyceraldehyde 3-phosphate + dihydroxyacetone phosphate. It participates in carbohydrate metabolism; D-tagatose 6-phosphate degradation; D-glyceraldehyde 3-phosphate and glycerone phosphate from D-tagatose 6-phosphate: step 2/2. Catalytic subunit of the tagatose-1,6-bisphosphate aldolase GatYZ, which catalyzes the reversible aldol condensation of dihydroxyacetone phosphate (DHAP or glycerone-phosphate) with glyceraldehyde 3-phosphate (G3P) to produce tagatose 1,6-bisphosphate (TBP). Requires GatZ subunit for full activity and stability. Is involved in the catabolism of galactitol. This chain is D-tagatose-1,6-bisphosphate aldolase subunit GatY, found in Escherichia coli O139:H28 (strain E24377A / ETEC).